Reading from the N-terminus, the 357-residue chain is UDP-N-acetylglucosamine--N-acetylmuramyl-(pentapeptide) pyrophosphoryl-undecaprenol N-acetylglucosamine transferase (357 aa).

UDP-N-acetyl-alpha-D-glucosamine contacts are provided by residues 15–17 (TGG), Asn124, Arg165, Ser194, and Gln288.

This sequence belongs to the glycosyltransferase 28 family. MurG subfamily.

The protein resides in the cell inner membrane. The catalysed reaction is di-trans,octa-cis-undecaprenyl diphospho-N-acetyl-alpha-D-muramoyl-L-alanyl-D-glutamyl-meso-2,6-diaminopimeloyl-D-alanyl-D-alanine + UDP-N-acetyl-alpha-D-glucosamine = di-trans,octa-cis-undecaprenyl diphospho-[N-acetyl-alpha-D-glucosaminyl-(1-&gt;4)]-N-acetyl-alpha-D-muramoyl-L-alanyl-D-glutamyl-meso-2,6-diaminopimeloyl-D-alanyl-D-alanine + UDP + H(+). It functions in the pathway cell wall biogenesis; peptidoglycan biosynthesis. Cell wall formation. Catalyzes the transfer of a GlcNAc subunit on undecaprenyl-pyrophosphoryl-MurNAc-pentapeptide (lipid intermediate I) to form undecaprenyl-pyrophosphoryl-MurNAc-(pentapeptide)GlcNAc (lipid intermediate II). In Trichormus variabilis (strain ATCC 29413 / PCC 7937) (Anabaena variabilis), this protein is UDP-N-acetylglucosamine--N-acetylmuramyl-(pentapeptide) pyrophosphoryl-undecaprenol N-acetylglucosamine transferase.